Reading from the N-terminus, the 204-residue chain is MAPKIAIVYYSMYGHIKKMADAELKGIQEAGGDAKLFQVAETLPQEVLDKMYAPPKDSSVPVLEDPAVLEEFDGILFGIPTRYGNFPAQFKTFWDKTGKQWQQGAFWGKYAGVFVSTGTLGGGQETTAITSMSTLVDHGFIYVPLGYKTAFSMLANLDEVHGGSPWGAGTFSAGDGSRQPSELELNIAQAQGKAFYEAVAKAHQ.

One can recognise a Flavodoxin-like domain in the interval 5-195 (IAIVYYSMYG…NIAQAQGKAF (191 aa)).

Belongs to the WrbA family.

Its subcellular location is the cytoplasm. In Alternaria alternata (Alternaria rot fungus), this protein is Minor allergen Alt a 7 (ALTA7).